Consider the following 556-residue polypeptide: Genetic interactor of prohibitins 3, mitochondrial (556 aa).

A mitochondrion-targeting transit peptide spans M1–K21. In terms of domain architecture, CP-type G spans E113 to S305.

It belongs to the TRAFAC class YlqF/YawG GTPase family. GEP3 subfamily.

The protein resides in the mitochondrion. Functionally, interacts genetically with prohibitins and thus may be involved in the mitochondrial lipid metabolism. This is Genetic interactor of prohibitins 3, mitochondrial (GEP3) from Saccharomyces cerevisiae (strain Lalvin EC1118 / Prise de mousse) (Baker's yeast).